The sequence spans 340 residues: GTP 3',8-cyclase (340 aa).

Positions 8–227 (KLGRPIRDLR…SMIQEEFDIE (220 aa)) constitute a Radical SAM core domain. Arg17 is a GTP binding site. Residues Cys24 and Cys28 each coordinate [4Fe-4S] cluster. Tyr30 lines the S-adenosyl-L-methionine pocket. Residue Cys31 participates in [4Fe-4S] cluster binding. Arg71 provides a ligand contact to GTP. S-adenosyl-L-methionine is bound at residue Gly75. Thr102 is a GTP binding site. Ser126 is an S-adenosyl-L-methionine binding site. Lys163 lines the GTP pocket. Met197 lines the S-adenosyl-L-methionine pocket. 2 residues coordinate [4Fe-4S] cluster: Cys261 and Cys264. A GTP-binding site is contributed by 266–268 (RAR). Cys278 provides a ligand contact to [4Fe-4S] cluster.

This sequence belongs to the radical SAM superfamily. MoaA family. Monomer and homodimer. [4Fe-4S] cluster serves as cofactor.

It catalyses the reaction GTP + AH2 + S-adenosyl-L-methionine = (8S)-3',8-cyclo-7,8-dihydroguanosine 5'-triphosphate + 5'-deoxyadenosine + L-methionine + A + H(+). Its pathway is cofactor biosynthesis; molybdopterin biosynthesis. In terms of biological role, catalyzes the cyclization of GTP to (8S)-3',8-cyclo-7,8-dihydroguanosine 5'-triphosphate. This chain is GTP 3',8-cyclase, found in Staphylococcus carnosus (strain TM300).